Consider the following 326-residue polypeptide: Probable GTP 3',8-cyclase (326 aa).

The region spanning 6–235 is the Radical SAM core domain; the sequence is LYGRPVLSLR…NRPRYIIRTQ (230 aa). Arg15 provides a ligand contact to GTP. [4Fe-4S] cluster contacts are provided by Cys22, Cys26, and Cys29. Residue Lys62 coordinates GTP. Gly66 contributes to the S-adenosyl-L-methionine binding site. GTP is bound at residue Thr92. Ser116 lines the S-adenosyl-L-methionine pocket. Residue Lys153 participates in GTP binding. Residues Cys253 and Cys256 each coordinate [4Fe-4S] cluster. Residue 258-260 participates in GTP binding; it reads RLR. Cys270 serves as a coordination point for [4Fe-4S] cluster.

Belongs to the radical SAM superfamily. MoaA family. It depends on [4Fe-4S] cluster as a cofactor.

It catalyses the reaction GTP + AH2 + S-adenosyl-L-methionine = (8S)-3',8-cyclo-7,8-dihydroguanosine 5'-triphosphate + 5'-deoxyadenosine + L-methionine + A + H(+). Its pathway is cofactor biosynthesis; molybdopterin biosynthesis. Functionally, catalyzes the cyclization of GTP to (8S)-3',8-cyclo-7,8-dihydroguanosine 5'-triphosphate. The sequence is that of Probable GTP 3',8-cyclase from Thermoplasma volcanium (strain ATCC 51530 / DSM 4299 / JCM 9571 / NBRC 15438 / GSS1).